Reading from the N-terminus, the 304-residue chain is Phosphoribosylaminoimidazole-succinocarboxamide synthase (304 aa).

The protein belongs to the SAICAR synthetase family.

It catalyses the reaction 5-amino-1-(5-phospho-D-ribosyl)imidazole-4-carboxylate + L-aspartate + ATP = (2S)-2-[5-amino-1-(5-phospho-beta-D-ribosyl)imidazole-4-carboxamido]succinate + ADP + phosphate + 2 H(+). It functions in the pathway purine metabolism; IMP biosynthesis via de novo pathway; 5-amino-1-(5-phospho-D-ribosyl)imidazole-4-carboxamide from 5-amino-1-(5-phospho-D-ribosyl)imidazole-4-carboxylate: step 1/2. The protein is Phosphoribosylaminoimidazole-succinocarboxamide synthase (ADE1) of Komagataella pastoris (Yeast).